The chain runs to 261 residues: Triosephosphate isomerase (261 aa).

10 to 12 provides a ligand contact to substrate; it reads NWK. H100 (electrophile) is an active-site residue. The active-site Proton acceptor is the E172. Residues G178, S218, and 239 to 240 contribute to the substrate site; that span reads GG.

The protein belongs to the triosephosphate isomerase family. Homodimer.

It is found in the cytoplasm. The catalysed reaction is D-glyceraldehyde 3-phosphate = dihydroxyacetone phosphate. The protein operates within carbohydrate biosynthesis; gluconeogenesis. It participates in carbohydrate degradation; glycolysis; D-glyceraldehyde 3-phosphate from glycerone phosphate: step 1/1. Its function is as follows. Involved in the gluconeogenesis. Catalyzes stereospecifically the conversion of dihydroxyacetone phosphate (DHAP) to D-glyceraldehyde-3-phosphate (G3P). The polypeptide is Triosephosphate isomerase (Mycolicibacterium paratuberculosis (strain ATCC BAA-968 / K-10) (Mycobacterium paratuberculosis)).